The primary structure comprises 205 residues: Glycerol-3-phosphate acyltransferase (205 aa).

Helical transmembrane passes span 4-24, 80-100, 112-132, and 138-158; these read IAPG…AILV, PFWL…PIFF, FGAI…TWLL, and GYSS…VWWF.

The protein belongs to the PlsY family. As to quaternary structure, probably interacts with PlsX.

It is found in the cell inner membrane. The enzyme catalyses an acyl phosphate + sn-glycerol 3-phosphate = a 1-acyl-sn-glycero-3-phosphate + phosphate. It participates in lipid metabolism; phospholipid metabolism. Functionally, catalyzes the transfer of an acyl group from acyl-phosphate (acyl-PO(4)) to glycerol-3-phosphate (G3P) to form lysophosphatidic acid (LPA). This enzyme utilizes acyl-phosphate as fatty acyl donor, but not acyl-CoA or acyl-ACP. The polypeptide is Glycerol-3-phosphate acyltransferase (Cronobacter sakazakii (strain ATCC BAA-894) (Enterobacter sakazakii)).